Reading from the N-terminus, the 365-residue chain is Probable dual-specificity RNA methyltransferase RlmN (365 aa).

Glu108 acts as the Proton acceptor in catalysis. A Radical SAM core domain is found at 114 to 347 (HNYGNSVCVT…VTIRREHGHD (234 aa)). Residues Cys121 and Cys352 are joined by a disulfide bond. The [4Fe-4S] cluster site is built by Cys128, Cys132, and Cys135. Residues 178 to 179 (GE), Ser210, 233 to 235 (SLH), and Asn309 contribute to the S-adenosyl-L-methionine site. Catalysis depends on Cys352, which acts as the S-methylcysteine intermediate.

This sequence belongs to the radical SAM superfamily. RlmN family. The cofactor is [4Fe-4S] cluster.

Its subcellular location is the cytoplasm. It carries out the reaction adenosine(2503) in 23S rRNA + 2 reduced [2Fe-2S]-[ferredoxin] + 2 S-adenosyl-L-methionine = 2-methyladenosine(2503) in 23S rRNA + 5'-deoxyadenosine + L-methionine + 2 oxidized [2Fe-2S]-[ferredoxin] + S-adenosyl-L-homocysteine. The enzyme catalyses adenosine(37) in tRNA + 2 reduced [2Fe-2S]-[ferredoxin] + 2 S-adenosyl-L-methionine = 2-methyladenosine(37) in tRNA + 5'-deoxyadenosine + L-methionine + 2 oxidized [2Fe-2S]-[ferredoxin] + S-adenosyl-L-homocysteine. Its function is as follows. Specifically methylates position 2 of adenine 2503 in 23S rRNA and position 2 of adenine 37 in tRNAs. This Geobacillus kaustophilus (strain HTA426) protein is Probable dual-specificity RNA methyltransferase RlmN.